Reading from the N-terminus, the 196-residue chain is MQLKRVAEAKLPTPWGDFLMVGFEELATGHDHLALIFGDISGDKPVLSRVHSECLTGDALFSLRCDCGFQLEVALTRIAEEGRGVLIYHRQEGRNIGLLNKIRAYALQDLGADTVEANHQLGFAADERDFTLCSDMYKLLGIKAVRLLTNNPKKVEILTQAGINIVERVPLIVGENPKNEHYLATKAAKMGHLLTK.

49–53 contributes to the GTP binding site; sequence RVHSE. Residues C54, C65, and C67 each contribute to the Zn(2+) site. GTP contacts are provided by residues Q70, 92–94, and T114; that span reads EGR. The Proton acceptor role is filled by D126. R128 serves as the catalytic Nucleophile. Residues T149 and K154 each contribute to the GTP site.

Belongs to the GTP cyclohydrolase II family. Homodimer. It depends on Zn(2+) as a cofactor.

The catalysed reaction is GTP + 4 H2O = 2,5-diamino-6-hydroxy-4-(5-phosphoribosylamino)-pyrimidine + formate + 2 phosphate + 3 H(+). Its pathway is cofactor biosynthesis; riboflavin biosynthesis; 5-amino-6-(D-ribitylamino)uracil from GTP: step 1/4. Catalyzes the conversion of GTP to 2,5-diamino-6-ribosylamino-4(3H)-pyrimidinone 5'-phosphate (DARP), formate and pyrophosphate. This Yersinia pestis protein is GTP cyclohydrolase-2.